The sequence spans 97 residues: CRISPR-associated endoribonuclease Cas2 1 (97 aa).

Aspartate 12 is a Mg(2+) binding site.

The protein belongs to the CRISPR-associated endoribonuclease Cas2 protein family. In terms of assembly, homodimer, forms a heterotetramer with a Cas1 homodimer. Mg(2+) serves as cofactor.

Its function is as follows. CRISPR (clustered regularly interspaced short palindromic repeat) is an adaptive immune system that provides protection against mobile genetic elements (viruses, transposable elements and conjugative plasmids). CRISPR clusters contain sequences complementary to antecedent mobile elements and target invading nucleic acids. CRISPR clusters are transcribed and processed into CRISPR RNA (crRNA). Functions as a ssRNA-specific endoribonuclease. Involved in the integration of spacer DNA into the CRISPR cassette. The chain is CRISPR-associated endoribonuclease Cas2 1 from Francisella tularensis subsp. novicida (strain U112).